Consider the following 155-residue polypeptide: Ribosomal RNA large subunit methyltransferase H (155 aa).

S-adenosyl-L-methionine is bound by residues Leu72, Gly103, and 122–127; that span reads LSDLTL.

This sequence belongs to the RNA methyltransferase RlmH family. As to quaternary structure, homodimer.

The protein resides in the cytoplasm. The catalysed reaction is pseudouridine(1915) in 23S rRNA + S-adenosyl-L-methionine = N(3)-methylpseudouridine(1915) in 23S rRNA + S-adenosyl-L-homocysteine + H(+). Its function is as follows. Specifically methylates the pseudouridine at position 1915 (m3Psi1915) in 23S rRNA. This chain is Ribosomal RNA large subunit methyltransferase H, found in Delftia acidovorans (strain DSM 14801 / SPH-1).